Here is a 382-residue protein sequence, read N- to C-terminus: uncharacterized protein (382 aa).

This is an uncharacterized protein from Bacillus subtilis (strain 168).